The primary structure comprises 354 residues: Trans-L-3-hydroxyproline dehydratase (354 aa).

C104 serves as the catalytic Proton acceptor. Residues 105 to 106, D269, and 274 to 275 contribute to the substrate site; these read GH and GS.

It belongs to the proline racemase family. As to quaternary structure, homodimer.

It carries out the reaction trans-3-hydroxy-L-proline = 1-pyrroline-2-carboxylate + H2O. Catalyzes the dehydration of trans-3-hydroxy-L-proline to delta-1-pyrroline-2-carboxylate (Pyr2C). The sequence is that of Trans-L-3-hydroxyproline dehydratase (L3hypdh) from Mus musculus (Mouse).